The following is a 615-amino-acid chain: Chaperone protein DnaK (615 aa).

Residue Thr177 is modified to Phosphothreonine; by autocatalysis. The disordered stretch occupies residues 567–615 (TKESQGIAMKAYQKAQEKQAQEKGTQENTTAKNEKPQDEVVDADFEEKK). The span at 581–591 (AQEKQAQEKGT) shows a compositional bias: basic and acidic residues. Residues 605–615 (EVVDADFEEKK) show a composition bias toward acidic residues.

It belongs to the heat shock protein 70 family.

Acts as a chaperone. This is Chaperone protein DnaK from Onion yellows phytoplasma (strain OY-M).